The chain runs to 252 residues: tRNA (guanine-N(7)-)-methyltransferase (252 aa).

Residues Glu51, Asp76, Asn103, and Asp125 each contribute to the S-adenosyl-L-methionine site. Asp125 is an active-site residue. Substrate contacts are provided by residues Lys129, Asp159, and 199 to 202 (TYYE).

This sequence belongs to the class I-like SAM-binding methyltransferase superfamily. TrmB family.

The catalysed reaction is guanosine(46) in tRNA + S-adenosyl-L-methionine = N(7)-methylguanosine(46) in tRNA + S-adenosyl-L-homocysteine. The protein operates within tRNA modification; N(7)-methylguanine-tRNA biosynthesis. Catalyzes the formation of N(7)-methylguanine at position 46 (m7G46) in tRNA. This Bacteroides thetaiotaomicron (strain ATCC 29148 / DSM 2079 / JCM 5827 / CCUG 10774 / NCTC 10582 / VPI-5482 / E50) protein is tRNA (guanine-N(7)-)-methyltransferase.